The primary structure comprises 485 residues: Ribulose bisphosphate carboxylase large chain (485 aa).

Residues 1–2 constitute a propeptide that is removed on maturation; it reads MS. An N-acetylproline modification is found at Pro3. Lys14 carries the N6,N6,N6-trimethyllysine modification. Positions 123 and 173 each coordinate substrate. The Proton acceptor role is filled by Lys175. Residue Lys177 coordinates substrate. Residues Lys201, Asp203, and Glu204 each coordinate Mg(2+). Lys201 is modified (N6-carboxylysine). The Proton acceptor role is filled by His294. Substrate contacts are provided by Arg295, His327, and Ser379.

It belongs to the RuBisCO large chain family. Type I subfamily. In terms of assembly, heterohexadecamer of 8 large chains and 8 small chains; disulfide-linked. The disulfide link is formed within the large subunit homodimers. The cofactor is Mg(2+). The disulfide bond which can form in the large chain dimeric partners within the hexadecamer appears to be associated with oxidative stress and protein turnover.

It is found in the plastid. It localises to the chloroplast. It catalyses the reaction 2 (2R)-3-phosphoglycerate + 2 H(+) = D-ribulose 1,5-bisphosphate + CO2 + H2O. The catalysed reaction is D-ribulose 1,5-bisphosphate + O2 = 2-phosphoglycolate + (2R)-3-phosphoglycerate + 2 H(+). RuBisCO catalyzes two reactions: the carboxylation of D-ribulose 1,5-bisphosphate, the primary event in carbon dioxide fixation, as well as the oxidative fragmentation of the pentose substrate in the photorespiration process. Both reactions occur simultaneously and in competition at the same active site. The protein is Ribulose bisphosphate carboxylase large chain of Helianthus annuus (Common sunflower).